A 183-amino-acid chain; its full sequence is TATA-box-binding protein 1 (183 aa).

2 repeat units span residues 8 to 84 (IENV…AKKL) and 99 to 177 (VQNI…RQQL).

The protein belongs to the TBP family.

Functionally, general factor that plays a role in the activation of archaeal genes transcribed by RNA polymerase. Binds specifically to the TATA box promoter element which lies close to the position of transcription initiation. The sequence is that of TATA-box-binding protein 1 from Methanosarcina acetivorans (strain ATCC 35395 / DSM 2834 / JCM 12185 / C2A).